We begin with the raw amino-acid sequence, 530 residues long: Na(+)/H(+) antiporter NhaB (530 aa).

12 helical membrane-spanning segments follow: residues Phe-13–Pro-33, Leu-34–Phe-54, Leu-90–Met-110, Ile-121–Phe-141, Phe-145–Ile-165, Leu-205–Pro-225, Phe-241–Ile-261, Gly-306–Ile-326, Glu-351–Ile-371, Leu-393–Gly-413, Gly-455–Tyr-475, and Met-481–Leu-501.

Belongs to the NhaB Na(+)/H(+) (TC 2.A.34) antiporter family.

The protein localises to the cell inner membrane. The catalysed reaction is 2 Na(+)(in) + 3 H(+)(out) = 2 Na(+)(out) + 3 H(+)(in). Its function is as follows. Na(+)/H(+) antiporter that extrudes sodium in exchange for external protons. This is Na(+)/H(+) antiporter NhaB from Aliivibrio fischeri (strain ATCC 700601 / ES114) (Vibrio fischeri).